Here is a 242-residue protein sequence, read N- to C-terminus: ATP synthase subunit a (242 aa).

6 consecutive transmembrane segments (helical) span residues Ile31–Trp51, Phe84–Thr104, Ile114–Val134, Phe140–Ile160, Val189–Met209, and Val210–Leu230.

Belongs to the ATPase A chain family. F-type ATPases have 2 components, CF(1) - the catalytic core - and CF(0) - the membrane proton channel. CF(1) has five subunits: alpha(3), beta(3), gamma(1), delta(1), epsilon(1). CF(0) has three main subunits: a(1), b(2) and c(9-12). The alpha and beta chains form an alternating ring which encloses part of the gamma chain. CF(1) is attached to CF(0) by a central stalk formed by the gamma and epsilon chains, while a peripheral stalk is formed by the delta and b chains.

It localises to the cell inner membrane. Its function is as follows. Key component of the proton channel; it plays a direct role in the translocation of protons across the membrane. In Rickettsia canadensis (strain McKiel), this protein is ATP synthase subunit a.